A 475-amino-acid chain; its full sequence is MQVTETLNEGLKREIKIVVPAKDLEEKLNERLDDTKGKVRLNGFRPGKVPGGHLRKMYGKSFMAEILNEILNDAPRSILADRNERPAMQPKIDIDEDEKILDGKADFTFSLKYEVLPKIEIKAFEHIEVIREIAAIPEKDIDEQVNRVLSSTRNYSLKEGSSEEGDRVTIDYLGKLEGVPFEGGADNDAQLILGSKQFIPGFEEQLVGVKAGDAKTISVKFPDNYSAVHLAGREAEFDITVKAVFRPDELKIDDEAAKKVGLESLDRLREVVRGQIESQYGSMTRQKVKRQILDALDADYNFEIPEGLLEIEFNNIWAQVNDDLKKAGRSFEDEGVTEEKAREEYHVLAQRRVRLGLVLSEIGMKVGVKVNEDELKAAVFEQVRQYPGQEKEIMDFFRKTPEAVENLRAPIFEEKVIDYLLAQIKVTDKEVTIEELMKEYDETDVPEEKPAKKKSAVKEKSAEKTSAKKKAPKKA.

Residues 165-250 (GDRVTIDYLG…VKAVFRPDEL (86 aa)) form the PPIase FKBP-type domain. Positions 439–466 (EYDETDVPEEKPAKKKSAVKEKSAEKTS) are enriched in basic and acidic residues. The disordered stretch occupies residues 439-475 (EYDETDVPEEKPAKKKSAVKEKSAEKTSAKKKAPKKA).

This sequence belongs to the FKBP-type PPIase family. Tig subfamily.

The protein resides in the cytoplasm. The catalysed reaction is [protein]-peptidylproline (omega=180) = [protein]-peptidylproline (omega=0). Functionally, involved in protein export. Acts as a chaperone by maintaining the newly synthesized protein in an open conformation. Functions as a peptidyl-prolyl cis-trans isomerase. This Bartonella tribocorum (strain CIP 105476 / IBS 506) protein is Trigger factor.